We begin with the raw amino-acid sequence, 113 residues long: Putative pterin-4-alpha-carbinolamine dehydratase (113 aa).

It belongs to the pterin-4-alpha-carbinolamine dehydratase family.

The catalysed reaction is (4aS,6R)-4a-hydroxy-L-erythro-5,6,7,8-tetrahydrobiopterin = (6R)-L-erythro-6,7-dihydrobiopterin + H2O. The chain is Putative pterin-4-alpha-carbinolamine dehydratase from Hydrogenovibrio crunogenus (strain DSM 25203 / XCL-2) (Thiomicrospira crunogena).